The sequence spans 337 residues: Phosphatidate cytidylyltransferase, mitochondrial (337 aa).

The protein belongs to the TAM41 family. Mg(2+) is required as a cofactor.

It is found in the mitochondrion inner membrane. It catalyses the reaction a 1,2-diacyl-sn-glycero-3-phosphate + CTP + H(+) = a CDP-1,2-diacyl-sn-glycerol + diphosphate. Its pathway is phospholipid metabolism; CDP-diacylglycerol biosynthesis; CDP-diacylglycerol from sn-glycerol 3-phosphate: step 3/3. Catalyzes the conversion of phosphatidic acid (PA) to CDP-diacylglycerol (CDP-DAG), an essential intermediate in the synthesis of phosphatidylglycerol, cardiolipin and phosphatidylinositol. The protein is Phosphatidate cytidylyltransferase, mitochondrial (Tamm41) of Mus musculus (Mouse).